The following is a 325-amino-acid chain: Lactonase drp35 (325 aa).

10 residues coordinate Ca(2+): E46, T108, G110, D128, T131, Y133, D136, N183, D234, and S235. D234 functions as the Proton donor in the catalytic mechanism.

This sequence belongs to the SMP-30/CGR1 family. The cofactor is Ca(2+).

It is found in the cytoplasm. Its function is as follows. Exhibits lactonase activity. Acts in cells with perturbed membrane integrity and is possibly related to the membrane homeostasis. This is Lactonase drp35 (drp35) from Staphylococcus epidermidis (strain ATCC 35984 / DSM 28319 / BCRC 17069 / CCUG 31568 / BM 3577 / RP62A).